Reading from the N-terminus, the 693-residue chain is Lamina-associated polypeptide 2, isoforms alpha/zeta (693 aa).

Residues 5–48 (LEDPSVLTKDKLKSELVANNVTLPAGEQRKDVYVQLYLQHLTAR) enclose the LEM-like domain. Disordered regions lie at residues 48-113 (RNRP…DVTE), 148-211 (LREQ…LAST), and 227-270 (TRPP…KLAP). The tract at residues 49 to 107 (NRPPLAAGANSKGPPDFSSDEEREPTPVLGSGASVGRGRGAVGRKATKKTDKPRLEDKD) is linker. 3 positions are modified to phosphoserine: Ser-59, Ser-66, and Ser-67. Thr-74 is modified (phosphothreonine). 2 positions are modified to phosphoserine: Ser-79 and Ser-82. Omega-N-methylarginine occurs at positions 85 and 87. The segment covering 96–105 (KKTDKPRLED) has biased composition (basic and acidic residues). The LEM domain maps to 108–152 (DLDVTELSNEELLDQLVRYGVNPGPIVGTTRKLYEKKLLKLREQG). Thr-153 carries the phosphothreonine modification. A compositionally biased stretch (polar residues) spans 154–177 (ESRSSTPLPTVSSSAENTRQNGSN). 2 positions are modified to phosphoserine: Ser-155 and Ser-158. A phosphothreonine mark is found at Thr-159 and Thr-163. Phosphoserine is present on residues Ser-165 and Ser-167. Over residues 178 to 190 (DSDRYSDNDEGKK) the composition is skewed to basic and acidic residues. A Nuclear localization signal motif is present at residues 190–196 (KKEHKKV). Ser-206 is subject to N6-acetyllysine. The span at 245–254 (TKRDPPRETC) shows a compositional bias: basic and acidic residues. Phosphoserine is present on Ser-310. Arg-329 carries the post-translational modification Omega-N-methylarginine. Positions 332–351 (KSRAQPLRAEEPGVSDQSVF) are disordered. A phosphoserine mark is found at Ser-349, Ser-352, Ser-368, Ser-420, and Ser-422. Low complexity predominate over residues 412–422 (QSSYQDSESLS). The disordered stretch occupies residues 412 to 442 (QSSYQDSESLSPPRKVPRLSEKPARGGDSGS). The stretch at 557 to 656 (TESCDKHLDL…MGRRYLWLKD (100 aa)) forms a coiled coil. Lys-655 carries the post-translational modification N6-acetyllysine.

Belongs to the LEM family. As to quaternary structure, homooligomer. Interacts with LMNA, BANF1 and RB1 and with chromosomes. Associates directly or indirectly with lamins at specific cell-cycle stages. Interacts with CMTM6. In terms of processing, phosphorylated in a mitose-specific manner.

The protein resides in the nucleus. The protein localises to the chromosome. May be involved in the structural organization of the nucleus and in the post-mitotic nuclear assembly. Plays an important role, together with LMNA, in the nuclear anchorage of RB1. This chain is Lamina-associated polypeptide 2, isoforms alpha/zeta (Tmpo), found in Mus musculus (Mouse).